Consider the following 632-residue polypeptide: 1-deoxy-D-xylulose-5-phosphate synthase (632 aa).

Residues His-75 and 117 to 119 (GHA) contribute to the thiamine diphosphate site. Asp-146 is a binding site for Mg(2+). Residues 147–148 (AA), Asn-175, and Glu-370 contribute to the thiamine diphosphate site. Position 175 (Asn-175) interacts with Mg(2+).

It belongs to the transketolase family. DXPS subfamily. As to quaternary structure, homodimer. It depends on Mg(2+) as a cofactor. Requires thiamine diphosphate as cofactor.

It catalyses the reaction D-glyceraldehyde 3-phosphate + pyruvate + H(+) = 1-deoxy-D-xylulose 5-phosphate + CO2. It functions in the pathway metabolic intermediate biosynthesis; 1-deoxy-D-xylulose 5-phosphate biosynthesis; 1-deoxy-D-xylulose 5-phosphate from D-glyceraldehyde 3-phosphate and pyruvate: step 1/1. Catalyzes the acyloin condensation reaction between C atoms 2 and 3 of pyruvate and glyceraldehyde 3-phosphate to yield 1-deoxy-D-xylulose-5-phosphate (DXP). The chain is 1-deoxy-D-xylulose-5-phosphate synthase from Chlamydia muridarum (strain MoPn / Nigg).